A 325-amino-acid chain; its full sequence is MTFIDKIRGHWARRMTVAAVAALLLPGLVGVVGGSATAGAFSRPGLPVEYLMVPSPSMGRDIKVQFQSGGPGSHAVYLLDGLRAQDDFNGWDINTNAFEMFLDSGLSVVMPVGGQSSFYSDWYQPACGNNGCVTYKWETFLTSELPEWLAANRDVAATGNAAIGLSMAGSAALILAAYHPDRFIYAGSMSGFLNPSEGWWPFLINISMGDAGGYKANDMWGPTEDPNSAWKRNDPMVQIPRLVANNTRIWVYCGNGQPNELGGGDLPATFLEGLTIRTNETFRDNYIAAGGNNGVFNFPNNGTHNWAYWGRELQAMVPDLQRVLG.

A signal peptide spans 1–38 (MTFIDKIRGHWARRMTVAAVAALLLPGLVGVVGGSATA). 82–83 (LR) is a substrate binding site. The tract at residues 98–108 (FEMFLDSGLSV) is fibronectin-binding. Cys127 and Cys132 are disulfide-bonded. Ser166 lines the substrate pocket. Ser166 (nucleophile) is an active-site residue. Glu272 is an active-site residue. Substrate-binding positions include 274 to 277 (LTIR) and 304 to 306 (HNW). The active site involves His304.

Belongs to the mycobacterial A85 antigen family.

The protein resides in the secreted. The catalysed reaction is 2 alpha,alpha'-trehalose 6-mycolate = alpha,alpha'-trehalose 6,6'-bismycolate + alpha,alpha-trehalose. The enzyme catalyses an acyl-CoA + a 1,2-diacyl-sn-glycerol = a triacyl-sn-glycerol + CoA. Functionally, the antigen 85 proteins (FbpA, FbpB, FbpC) are responsible for the high affinity of mycobacteria for fibronectin, a large adhesive glycoprotein. They also help to maintain the integrity of the cell wall by catalyzing the transfer of mycolic acids to cell wall arabinogalactan and through the synthesis of alpha,alpha-trehalose dimycolate (TDM, cord factor). They catalyze the transfer of a mycoloyl residue from one molecule of alpha,alpha-trehalose monomycolate (TMM) to another TMM, leading to the formation of TDM. In Mycolicibacterium smegmatis (strain ATCC 700084 / mc(2)155) (Mycobacterium smegmatis), this protein is Diacylglycerol acyltransferase/mycolyltransferase Ag85B (fbpB).